Here is a 132-residue protein sequence, read N- to C-terminus: MSRKRTSPNRNVQIADQIQRDLSELIMREVKDPRIGIVTIQSVELTPDYAHAKIYFTALTGDPDKTQEALNHASGHLHNLLFKRLHIHTVPTLHFHYDQTIEKAVEMSRLIKEANSTRAKDDDEADAPAKDD.

The tract at residues 113 to 132 (EANSTRAKDDDEADAPAKDD) is disordered.

The protein belongs to the RbfA family. In terms of assembly, monomer. Binds 30S ribosomal subunits, but not 50S ribosomal subunits or 70S ribosomes.

The protein resides in the cytoplasm. Functionally, one of several proteins that assist in the late maturation steps of the functional core of the 30S ribosomal subunit. Associates with free 30S ribosomal subunits (but not with 30S subunits that are part of 70S ribosomes or polysomes). Required for efficient processing of 16S rRNA. May interact with the 5'-terminal helix region of 16S rRNA. The chain is Ribosome-binding factor A from Burkholderia ambifaria (strain MC40-6).